Reading from the N-terminus, the 150-residue chain is Large ribosomal subunit protein bL9 (150 aa).

It belongs to the bacterial ribosomal protein bL9 family.

Binds to the 23S rRNA. The chain is Large ribosomal subunit protein bL9 from Polynucleobacter necessarius subsp. necessarius (strain STIR1).